The following is an 804-amino-acid chain: uncharacterized protein (804 aa).

The next 10 helical transmembrane spans lie at 15–35 (LLIVWLALSLAVACVLALGNI), 243–263 (FLLLSALLTLLLAVAAVAVAM), 301–321 (LSAVTGGAIGLLFENVLMVLL), 333–353 (SLWPWLWALGTMTVISLLVGL), 381–401 (FYLPIVSVVVVLLLAGLMGGS), 403–423 (LLWAVLAGAVVLALLCGVLGW), 453–473 (TLSQLSAFSLSFMLLALLLVL), 680–700 (ALEVMVVLVTACGMLLLLAQV), 734–754 (MLGFVSGLVAAIGAETALAVL), and 769–789 (LWIVLPCSGALLLSLFGGWLG).

Belongs to the ABC-4 integral membrane protein family.

The protein resides in the cell membrane. This is an uncharacterized protein from Escherichia coli (strain K12).